The following is a 100-amino-acid chain: Small ribosomal subunit protein uS14 (100 aa).

Belongs to the universal ribosomal protein uS14 family. Part of the 30S ribosomal subunit. Contacts proteins S3 and S10.

In terms of biological role, binds 16S rRNA, required for the assembly of 30S particles and may also be responsible for determining the conformation of the 16S rRNA at the A site. This chain is Small ribosomal subunit protein uS14, found in Synechococcus sp. (strain CC9902).